We begin with the raw amino-acid sequence, 342 residues long: Prenyl transferase ptmC (342 aa).

Residues 17–37 (LSFLTLTVGALALIVVLYISI) form a helical membrane-spanning segment. Histidine 110 is an isopentenyl diphosphate binding site. Mg(2+) is bound by residues aspartate 117 and aspartate 121. A dimethylallyl diphosphate-binding site is contributed by arginine 126. Residue asparagine 154 is glycosylated (N-linked (GlcNAc...) asparagine). Lysine 210, threonine 211, glutamine 240, asparagine 247, and lysine 257 together coordinate dimethylallyl diphosphate.

This sequence belongs to the FPP/GGPP synthase family.

The protein resides in the membrane. It functions in the pathway secondary metabolite biosynthesis. Its function is as follows. Prenyl transferase; part of the gene cluster that mediates the biosynthesis of the indole diterpenes penitrems. The geranylgeranyl diphosphate (GGPP) synthase ptmG catalyzes the first step in penitrem biosynthesis via conversion of farnesyl pyrophosphate and isopentyl pyrophosphate into geranylgeranyl pyrophosphate (GGPP). Condensation of indole-3-glycerol phosphate with GGPP by the prenyl transferase ptmC then forms 3-geranylgeranylindole (3-GGI). Epoxidation by the FAD-dependent monooxygenase ptmM leads to a epoxidized-GGI that is substrate of the terpene cyclase ptmB for cyclization to yield paspaline. Paspaline is subsequently converted to 13-desoxypaxilline by the cytochrome P450 monooxygenase ptmP, the latter being then converted to paxilline by the cytochrome P450 monooxygenase ptmQ. Paxilline is converted to beta-paxitriol via C-10 ketoreduction by the short-chain dehydrogenase ptmH which can be monoprenylated at the C-20 by the indole diterpene prenyltransferase ptmD. A two-step elimination (acetylation and elimination) process performed by the O-acetyltransferase ptmV and ptmI leads to the production of the prenylated form of penijanthine. The FAD-linked oxidoreductase ptmO then converts the prenylated form of penijanthine into PC-M5 which is in turn transformed into PC-M4 by the aromatic dimethylallyltransferase ptmE. Five sequential oxidative transformations performed by the cytochrome P450 monooxygenases ptmK, ptmU, ptmL, ptmN and ptmJ yield the various penitrem compounds. PtmK, ptmU and ptmM are involved in the formation of the key bicyclic ring of penitrem C via the formation of the intermediates secopenitrem D and penitrem D. PtmL catalyzes the epoxidation of penitrem D and C to yield penitrem B and F, respectively. PtmJ catalyzes the last benzylic hydroxylation to convert penitrem B to prenitrem E and penitrem F to penitrem A. The chain is Prenyl transferase ptmC from Penicillium ochrochloron.